A 394-amino-acid polypeptide reads, in one-letter code: UPF0284 protein SYNW1869 (394 aa).

Belongs to the UPF0284 family.

The protein is UPF0284 protein SYNW1869 of Parasynechococcus marenigrum (strain WH8102).